Consider the following 505-residue polypeptide: Lysine--tRNA ligase (505 aa).

Mg(2+)-binding residues include Glu-415 and Glu-422.

Belongs to the class-II aminoacyl-tRNA synthetase family. As to quaternary structure, homodimer. It depends on Mg(2+) as a cofactor.

The protein localises to the cytoplasm. The enzyme catalyses tRNA(Lys) + L-lysine + ATP = L-lysyl-tRNA(Lys) + AMP + diphosphate. The chain is Lysine--tRNA ligase from Enterobacter sp. (strain 638).